The sequence spans 178 residues: Protein GrpE (178 aa).

Positions 1–11 (MAEDQAPREET) are enriched in basic and acidic residues. Residues 1-30 (MAEDQAPREETVEAPELTEAPEIDELETLR) form a disordered region.

Belongs to the GrpE family. As to quaternary structure, homodimer.

It localises to the cytoplasm. Participates actively in the response to hyperosmotic and heat shock by preventing the aggregation of stress-denatured proteins, in association with DnaK and GrpE. It is the nucleotide exchange factor for DnaK and may function as a thermosensor. Unfolded proteins bind initially to DnaJ; upon interaction with the DnaJ-bound protein, DnaK hydrolyzes its bound ATP, resulting in the formation of a stable complex. GrpE releases ADP from DnaK; ATP binding to DnaK triggers the release of the substrate protein, thus completing the reaction cycle. Several rounds of ATP-dependent interactions between DnaJ, DnaK and GrpE are required for fully efficient folding. This is Protein GrpE from Cereibacter sphaeroides (strain ATCC 17023 / DSM 158 / JCM 6121 / CCUG 31486 / LMG 2827 / NBRC 12203 / NCIMB 8253 / ATH 2.4.1.) (Rhodobacter sphaeroides).